The primary structure comprises 369 residues: Cobalt-precorrin-5B C(1)-methyltransferase (369 aa).

This sequence belongs to the CbiD family.

It catalyses the reaction Co-precorrin-5B + S-adenosyl-L-methionine = Co-precorrin-6A + S-adenosyl-L-homocysteine. The protein operates within cofactor biosynthesis; adenosylcobalamin biosynthesis; cob(II)yrinate a,c-diamide from sirohydrochlorin (anaerobic route): step 6/10. Functionally, catalyzes the methylation of C-1 in cobalt-precorrin-5B to form cobalt-precorrin-6A. The sequence is that of Cobalt-precorrin-5B C(1)-methyltransferase from Geobacter metallireducens (strain ATCC 53774 / DSM 7210 / GS-15).